A 780-amino-acid polypeptide reads, in one-letter code: MDEQAGPGVFFSNNHPGAGGAKGLGPLAEAAAAGDGAAAAGAARAQYSLPGILHFLQHEWARFEVERAQWEVERAELQAQIAFLQGERKGQENLKKDLVRRIKMLEYALKQERAKYHKLKYGTELNQGDMKPPSYDSDEGNETEVQPQQNSQLMWKQGRQLLRQYLQEVGYTDTILDVKSKRVRALLGFSSDVTDREDDKNQDSVVNGTEAEVKETAMIAKSELTDSASVLDNFKFLESAAADFSDEDEDDDVDGREKSVIDTSTIVRKKALPDSGEDRDTKEALKEFDFLVTSEEGDNESRSAGDGTDWEKEDQCLMPEAWNVDQGVITKLKEQYKKERKGKKGVKRPNRSKLQDMLANLRDVDELPSLQPSVGSPSRPSSSRLPEHEINRADEVEALTFPPSSGKSFIMGADEALESELGLGELAGLTVANEADSLTYDIANNKDALRKTWNPKFTLRSHFDGIRALAFHPIEPVLITASEDHTLKMWNLQKTAPAKKSTSLDVEPIYTFRAHKGPVLCVVMSSNGEQCYSGGTDGLIQGWNTTNPNIDPYDSYDPSVLRGPLLGHTDAVWGLAYSAAHQRLLSCSADGTLRLWNTTEVAPALSVFNDTKELGIPASVDLVSSDPSHMVASFSKGYTSIFNMETQQRILTLESNVDTTANSSCQINRVISHPTLPISITAHEDRHIKFYDNNTGKLIHSMVAHLEAVTSLAVDPNGLYLMSGSHDCSIRLWNLESKTCIQEFTAHRKKFEESIHDVAFHPSKCYIASAGADALAKVFV.

The stretch at 53–120 (LHFLQHEWAR…QERAKYHKLK (68 aa)) forms a coiled coil. The interval 55–63 (FLQHEWARF) is caveolin-binding. A disordered region spans residues 124–150 (ELNQGDMKPPSYDSDEGNETEVQPQQN). Phosphoserine is present on S137. The interval 149–166 (QNSQLMWKQGRQLLRQYL) is calmodulin-binding. Residue T225 is modified to Phosphothreonine. 4 positions are modified to phosphoserine: S227, S229, S245, and S259. Disordered regions lie at residues 289-310 (DFLV…GTDW) and 365-387 (DELP…RLPE). Residues 299–310 (NESRSAGDGTDW) show a composition bias toward basic and acidic residues. WD repeat units lie at residues 461–500 (SHFD…PAKK), 514–553 (AHKG…IDPY), 567–606 (GHTD…PALS), 662–701 (NSSC…LIHS), 704–743 (AHLE…CIQE), and 750–780 (KFEE…KVFV).

It belongs to the WD repeat striatin family. As to quaternary structure, part of the core of STRIPAK complexes composed of PP2A catalytic and scaffolding subunits, the striatins (PP2A regulatory subunits), the striatin-associated proteins MOB4, STRIP1 and STRIP2, PDCD10 and members of the STE20 kinases, such as STK24 and STK26. Interacts with CTTNBP2; this interaction may regulate dendritic spine distribution of STRN. Activation of glutamate receptors weakens the interaction with CTTNBP2. In terms of tissue distribution, preferentially expressed in brain.

The protein localises to the cytoplasm. It is found in the membrane. Its subcellular location is the cell projection. The protein resides in the dendritic spine. In terms of biological role, calmodulin-binding scaffolding protein which is the center of the striatin-interacting phosphatase and kinase (STRIPAK) complexes. STRIPAK complexes have critical roles in protein (de)phosphorylation and are regulators of multiple signaling pathways including Hippo, MAPK, nuclear receptor and cytoskeleton remodeling. Different types of STRIPAK complexes are involved in a variety of biological processes such as cell growth, differentiation, apoptosis, metabolism and immune regulation. This chain is Striatin (STRN), found in Homo sapiens (Human).